A 464-amino-acid chain; its full sequence is UDP-N-acetylmuramate--L-alanine ligase (464 aa).

Residue G112–T118 participates in ATP binding.

It belongs to the MurCDEF family.

Its subcellular location is the cytoplasm. The catalysed reaction is UDP-N-acetyl-alpha-D-muramate + L-alanine + ATP = UDP-N-acetyl-alpha-D-muramoyl-L-alanine + ADP + phosphate + H(+). It functions in the pathway cell wall biogenesis; peptidoglycan biosynthesis. Its function is as follows. Cell wall formation. The sequence is that of UDP-N-acetylmuramate--L-alanine ligase from Chromobacterium violaceum (strain ATCC 12472 / DSM 30191 / JCM 1249 / CCUG 213 / NBRC 12614 / NCIMB 9131 / NCTC 9757 / MK).